Reading from the N-terminus, the 100-residue chain is Small ribosomal subunit protein uS14c (100 aa).

This sequence belongs to the universal ribosomal protein uS14 family. As to quaternary structure, part of the 30S ribosomal subunit.

The protein localises to the plastid. The protein resides in the chloroplast. Binds 16S rRNA, required for the assembly of 30S particles. The protein is Small ribosomal subunit protein uS14c of Cyanidium caldarium (Red alga).